We begin with the raw amino-acid sequence, 338 residues long: Ketol-acid reductoisomerase (NADP(+)) (338 aa).

In terms of domain architecture, KARI N-terminal Rossmann spans 1 to 181; the sequence is MKVYYDKDAD…GGTKGGVIET (181 aa). Residues 24 to 27, Arg47, and Ser52 contribute to the NADP(+) site; that span reads YGSQ. His107 is a catalytic residue. Gly133 is a binding site for NADP(+). Residues 182 to 327 enclose the KARI C-terminal knotted domain; sequence NFREETETDL…GQLRDMMPWI (146 aa). The Mg(2+) site is built by Asp190, Glu194, Glu226, and Glu230. Ser251 serves as a coordination point for substrate.

It belongs to the ketol-acid reductoisomerase family. The cofactor is Mg(2+).

It catalyses the reaction (2R)-2,3-dihydroxy-3-methylbutanoate + NADP(+) = (2S)-2-acetolactate + NADPH + H(+). The enzyme catalyses (2R,3R)-2,3-dihydroxy-3-methylpentanoate + NADP(+) = (S)-2-ethyl-2-hydroxy-3-oxobutanoate + NADPH + H(+). It participates in amino-acid biosynthesis; L-isoleucine biosynthesis; L-isoleucine from 2-oxobutanoate: step 2/4. Its pathway is amino-acid biosynthesis; L-valine biosynthesis; L-valine from pyruvate: step 2/4. Functionally, involved in the biosynthesis of branched-chain amino acids (BCAA). Catalyzes an alkyl-migration followed by a ketol-acid reduction of (S)-2-acetolactate (S2AL) to yield (R)-2,3-dihydroxy-isovalerate. In the isomerase reaction, S2AL is rearranged via a Mg-dependent methyl migration to produce 3-hydroxy-3-methyl-2-ketobutyrate (HMKB). In the reductase reaction, this 2-ketoacid undergoes a metal-dependent reduction by NADPH to yield (R)-2,3-dihydroxy-isovalerate. In Aromatoleum aromaticum (strain DSM 19018 / LMG 30748 / EbN1) (Azoarcus sp. (strain EbN1)), this protein is Ketol-acid reductoisomerase (NADP(+)).